We begin with the raw amino-acid sequence, 822 residues long: Stemar-13-ene synthase (822 aa).

Residues 1-10 (MMLLSSSYSG) are compositionally biased toward polar residues. Residues 1–29 (MMLLSSSYSGGQFPGVSPLGTRPKRSTTV) form a disordered region. D553, D557, N698, T702, and E706 together coordinate Mg(2+). The DDXXD motif signature appears at 553–557 (DDLFD).

This sequence belongs to the terpene synthase family. It depends on Mg(2+) as a cofactor.

The enzyme catalyses 9alpha-copalyl diphosphate = stemar-13-ene + diphosphate. Functionally, catalyzes the conversion of syn-copalyl diphosphate to the phytoalexin precursor stemarene. In Oryza sativa subsp. japonica (Rice), this protein is Stemar-13-ene synthase (KSL8).